A 1164-amino-acid chain; its full sequence is DNA-directed RNA polymerase (1164 aa).

It belongs to the RNA polymerase beta chain family. As to quaternary structure, the DNA-dependent RNA polymerase used for intermediate and late genes expression consists of eight subunits 147 kDa, 133 kDa, 35 kDa, 30 kDa, 22 kDa, 19 kDa, 18 kDa and 7 kDa totalling more than 500 kDa in mass. The same holoenzyme, with the addition of the transcription-specificity factor RAP94, is used for early gene expression.

The protein localises to the virion. The catalysed reaction is RNA(n) + a ribonucleoside 5'-triphosphate = RNA(n+1) + diphosphate. Functionally, part of the DNA-dependent RNA polymerase which catalyzes the transcription of viral DNA into RNA using the four ribonucleoside triphosphates as substrates. Responsible for the transcription of early, intermediate and late genes. DNA-dependent RNA polymerase associates with the early transcription factor (ETF), itself composed of OPG118 and OPG133, thereby allowing the early genes transcription. Late transcription, and probably also intermediate transcription, require newly synthesized RNA polymerase. The polypeptide is DNA-directed RNA polymerase (OPG151) (Monkeypox virus).